The chain runs to 546 residues: U3 small nucleolar RNA-associated protein 18 homolog (546 aa).

Disordered stretches follow at residues 1–55 (MSLS…LEES), 94–118 (SAVR…EENG), and 177–205 (NPGT…DGGV). Positions 13–23 (IKREELKKQYE) are enriched in basic and acidic residues. Residues 24-35 (DVEDEEEIGSDD) show a composition bias toward acidic residues. Residue Ser33 is modified to Phosphoserine. Basic and acidic residues predominate over residues 45 to 55 (TEKEKQKLEES). Composition is skewed to acidic residues over residues 101–117 (DYED…DEEN) and 193–205 (ESSD…DGGV). WD repeat units lie at residues 242 to 281 (PSNG…NTKI), 372 to 411 (KMNG…CLYK), 413 to 454 (VDEG…GGKR), and 509 to 545 (STMH…HYQN). The DWD box motif lies at 389-404 (LLSSGGDGQVYVWDLR).

This sequence belongs to the WD repeat UTP18 family.

It localises to the nucleus. It is found in the nucleolus. Its function is as follows. Involved in nucleolar processing of pre-18S ribosomal RNA. In Arabidopsis thaliana (Mouse-ear cress), this protein is U3 small nucleolar RNA-associated protein 18 homolog.